We begin with the raw amino-acid sequence, 633 residues long: Ankyrin repeat and SOCS box protein 2 (633 aa).

Residues 26–45 (SEDELVQMAIEQSLADKTRG) form the UIM domain. 12 ANK repeats span residues 102 to 131 (APVD…NLSE), 135 to 165 (EGWL…VIDQ), 169 to 198 (QEET…EPDI), 202 to 231 (SRET…DTNH), 235 to 264 (RGWT…KVEA), 268 to 297 (YGIT…DINT), 301 to 330 (DSAS…DANK), 334 to 363 (DGML…RTRV), 366 to 395 (SGIS…DVNA), 408 to 437 (RRSS…DPNR), 438 to 467 (DVIN…NIDA), and 474 to 502 (TAFP…NGEP). S369 carries the phosphoserine modification. The SOCS box domain occupies 579–633 (EDWAVIKEKAEPPRPLAHLCRLRVRKAIGKYRIKLLDTLPLPGRLIRYLKYENTQ).

It belongs to the ankyrin SOCS box (ASB) family. Component of a probable ECS E3 ubiquitin-protein ligase complex which contains CUL5, either RBX1 or RNF7/RBX2, Elongin BC complex (ELOB and ELOC) and ASB2. Interacts with SKP2. Through its interaction with SKP2, likely to bridge the formation of dimeric E3-ubiquitin-protein ligase complexes composed of an ECS complex and an SCF(SKP2) complex. Interacts with JAK2; the interaction targets JAK2 for Notch-mediated proteasomal degradation. Interacts with TCF3/E2A; the interaction is mediated by SKP2 and targets TCF3 for Notch-mediated proteasomal degradation. Interacts with DES. Monoubiquitinated.

The protein localises to the cytoplasm. It localises to the cytoskeleton. Its subcellular location is the stress fiber. It is found in the myofibril. The protein resides in the sarcomere. The protein localises to the z line. It functions in the pathway protein modification; protein ubiquitination. Functionally, substrate-recognition component of a SCF-like ECS (Elongin-Cullin-SOCS-box protein) E3 ubiquitin-protein ligase complex which mediates the ubiquitination and subsequent proteasomal degradation of target proteins. Mediates Notch-induced ubiquitination and degradation of substrates including E2A and JAK2. Required during embryonic heart development for complete heart looping. Required for cardiomyocyte differentiation. Involved in myogenic differentiation and targets filamin FLNB for proteasomal degradation but not filamin FLNA. Also targets DES for proteasomal degradation. Acts as a negative regulator of skeletal muscle mass. The sequence is that of Ankyrin repeat and SOCS box protein 2 from Bos taurus (Bovine).